A 188-amino-acid polypeptide reads, in one-letter code: Peptidyl-tRNA hydrolase (188 aa).

Y15 contributes to the tRNA binding site. H20 acts as the Proton acceptor in catalysis. TRNA-binding residues include F66, N68, and N114.

This sequence belongs to the PTH family. In terms of assembly, monomer.

Its subcellular location is the cytoplasm. The catalysed reaction is an N-acyl-L-alpha-aminoacyl-tRNA + H2O = an N-acyl-L-amino acid + a tRNA + H(+). Its function is as follows. Hydrolyzes ribosome-free peptidyl-tRNAs (with 1 or more amino acids incorporated), which drop off the ribosome during protein synthesis, or as a result of ribosome stalling. Catalyzes the release of premature peptidyl moieties from peptidyl-tRNA molecules trapped in stalled 50S ribosomal subunits, and thus maintains levels of free tRNAs and 50S ribosomes. This chain is Peptidyl-tRNA hydrolase, found in Lactococcus lactis subsp. lactis (strain IL1403) (Streptococcus lactis).